An 82-amino-acid polypeptide reads, in one-letter code: ATP synthase subunit c, chloroplastic (82 aa).

2 helical membrane-spanning segments follow: residues Pro3 to Gly23 and Phe57 to Ala77.

The protein belongs to the ATPase C chain family. F-type ATPases have 2 components, F(1) - the catalytic core - and F(0) - the membrane proton channel. F(1) has five subunits: alpha(3), beta(3), gamma(1), delta(1), epsilon(1). F(0) has four main subunits: a(1), b(1), b'(1) and c(10-14). The alpha and beta chains form an alternating ring which encloses part of the gamma chain. F(1) is attached to F(0) by a central stalk formed by the gamma and epsilon chains, while a peripheral stalk is formed by the delta, b and b' chains.

The protein resides in the plastid. The protein localises to the chloroplast thylakoid membrane. Its function is as follows. F(1)F(0) ATP synthase produces ATP from ADP in the presence of a proton or sodium gradient. F-type ATPases consist of two structural domains, F(1) containing the extramembraneous catalytic core and F(0) containing the membrane proton channel, linked together by a central stalk and a peripheral stalk. During catalysis, ATP synthesis in the catalytic domain of F(1) is coupled via a rotary mechanism of the central stalk subunits to proton translocation. Functionally, key component of the F(0) channel; it plays a direct role in translocation across the membrane. A homomeric c-ring of between 10-14 subunits forms the central stalk rotor element with the F(1) delta and epsilon subunits. The sequence is that of ATP synthase subunit c, chloroplastic from Oltmannsiellopsis viridis (Marine flagellate).